The following is a 246-amino-acid chain: Putative protein phosphatase 2C-type (246 aa).

The PPM-type phosphatase domain maps to 2–240 (KISLKTDIGQ…DNITIALVHN (239 aa)). Mn(2+) is bound by residues Asp36, Gly37, Asp192, and Asp231.

Requires Mg(2+) as cofactor. It depends on Mn(2+) as a cofactor.

It carries out the reaction O-phospho-L-seryl-[protein] + H2O = L-seryl-[protein] + phosphate. It catalyses the reaction O-phospho-L-threonyl-[protein] + H2O = L-threonyl-[protein] + phosphate. This is Putative protein phosphatase 2C-type from Streptococcus pyogenes serotype M6 (strain ATCC BAA-946 / MGAS10394).